The following is an 821-amino-acid chain: Cell wall integrity transcriptional regulator CAS5 (821 aa).

Disordered stretches follow at residues 42 to 66 (HLQS…LNQH), 219 to 245 (FESP…LSTP), 305 to 432 (TKSN…STSQ), 544 to 576 (QEEE…TSSL), and 607 to 750 (VKQE…KHKC). The span at 222–245 (PQSHIQSQPSYSQGYHNQNSLSTP) shows a compositional bias: polar residues. Residues 305 to 318 (TKSNSTSSYNSTLN) show a composition bias toward low complexity. Polar residues predominate over residues 319–329 (PFYTPSQQLSS). Basic residues predominate over residues 372–387 (QLRKAKSYTSLLRKKK). Low complexity predominate over residues 396–412 (QNQQHQQQQQQQQQQQQ). Over residues 422–432 (QNLSFPNSTSQ) the composition is skewed to polar residues. Over residues 545–561 (EEEQEHQDEQMEIDSFE) the composition is skewed to acidic residues. 2 stretches are compositionally biased toward low complexity: residues 662 to 674 (LVNK…NNDT) and 684 to 693 (KNTNGNGNND). The span at 694–714 (NDNDSEENNDNVDDADDDDDG) shows a compositional bias: acidic residues. 2 consecutive C2H2-type zinc fingers follow at residues 748-770 (HKCP…LKSH) and 776-801 (FECQ…KKIH). Position 769 is a phosphoserine (serine 769).

In terms of processing, phosphorylation at Ser-769 and probably additional serine residues. GLC7 dephosphorylates CAS5 in response to cell wall stress which leads to its translocation to the nucleus.

The protein resides in the nucleus. It is found in the cytoplasm. In terms of biological role, transcription factor that acts with ADA2 to promote cell wall integrity. Regulates the expression of target genes in concert with the transcriptional regulators SWI4 and SWI6. Crucial for proper cell cycle dynamics and responses to echinocandins, which inhibit beta-1,3-glucan synthesis. Has distinct transcriptional targets under basal and stress conditions. Also regulates a transcriptional network that influences the response to fluconazole. Plays a key role in adherence, hyphal development, and virulence. Acts as a repressor of hypha-specific genes during yeast-form growth. The chain is Cell wall integrity transcriptional regulator CAS5 from Candida albicans (strain SC5314 / ATCC MYA-2876) (Yeast).